The sequence spans 774 residues: Shugoshin (774 aa).

Residues 41-105 are a coiled coil; the sequence is SLRIRGLENE…AELSSLLASL (65 aa). Disordered stretches follow at residues 106–151, 205–661, and 676–774; these read GEPP…QEGR, SPSP…DAQL, and CASP…SMML. Residues 109–120 show a composition bias toward basic and acidic residues; it reads PSKRRLSEERRY. Positions 214 to 224 are enriched in acidic residues; sequence AEETETTEQVE. Over residues 297–318 the composition is skewed to polar residues; it reads GDNQNEPNKATKLQQGKENGNE. Residues 382-398 show a composition bias toward basic and acidic residues; the sequence is KGKEKVDLPAPDKKSAV. Residues 399-409 are compositionally biased toward polar residues; the sequence is EETQGNSTSAF. 2 stretches are compositionally biased toward basic and acidic residues: residues 482–495 and 549–558; these read NLRD…KELF and FEKEKEKEPQ. 2 stretches are compositionally biased toward polar residues: residues 595–604 and 640–651; these read PSVQEQSTLN and QSMSRSVPTIPT. Residues 706 to 722 are compositionally biased toward low complexity; it reads ASSAASTETTATASAKP. Positions 743-754 are enriched in acidic residues; it reads LAQEEEDEEDVG. Basic residues predominate over residues 765–774; sequence RASRRRSMML.

The protein belongs to the shugoshin family.

The protein resides in the nucleus. Its subcellular location is the chromosome. The protein localises to the centromere. Functionally, plays a central role in chromosome cohesion during cell division by preventing premature dissociation of cohesin complex from centromeres after prophase, when most of cohesin complex dissociates from chromosomes arms. This chain is Shugoshin (sgo-1), found in Neurospora crassa (strain ATCC 24698 / 74-OR23-1A / CBS 708.71 / DSM 1257 / FGSC 987).